The following is a 203-amino-acid chain: MHNAPESVLNALVPMVVEQTAKGERSYDIYSRLLKERVIFLVGQVEEHMANLIVAQLLFLESESPDKDIYLYINSPGGSVTAGMAIYDTMQFIKPNVSTVCMGQAASMGAFLLAGGAKGKRHCLPNSRVMIHQPLGGFQGQASDIAIHAKEILGIKNKLNQMLAEHTGQPLDIIERDTDRDNFMSATQAVEYGIVDSLLTSRG.

Serine 107 (nucleophile) is an active-site residue. Residue histidine 132 is part of the active site.

It belongs to the peptidase S14 family. As to quaternary structure, fourteen ClpP subunits assemble into 2 heptameric rings which stack back to back to give a disk-like structure with a central cavity, resembling the structure of eukaryotic proteasomes.

Its subcellular location is the cytoplasm. It catalyses the reaction Hydrolysis of proteins to small peptides in the presence of ATP and magnesium. alpha-casein is the usual test substrate. In the absence of ATP, only oligopeptides shorter than five residues are hydrolyzed (such as succinyl-Leu-Tyr-|-NHMec, and Leu-Tyr-Leu-|-Tyr-Trp, in which cleavage of the -Tyr-|-Leu- and -Tyr-|-Trp bonds also occurs).. In terms of biological role, cleaves peptides in various proteins in a process that requires ATP hydrolysis. Has a chymotrypsin-like activity. Plays a major role in the degradation of misfolded proteins. The protein is ATP-dependent Clp protease proteolytic subunit of Shewanella frigidimarina (strain NCIMB 400).